The following is a 689-amino-acid chain: Calcium-responsive transcription factor (689 aa).

2 disordered regions span residues 1–46 and 541–609; these read MEQR…PTIL and SPDG…SVPN. A compositionally biased stretch (basic and acidic residues) spans 13–29; that stretch reads DGEKSEREAQGFEHRTC. Composition is skewed to polar residues over residues 541–559 and 578–601; these read SPDGSQALVSVDSHASSSP and LGQSQNPGTDTCLTQDNSTSSSTG.

Highly expressed in brain and testis.

The protein resides in the nucleus. Acts as a transcriptional activator that mediates the calcium- and neuron-selective induction of BDNF exon III transcription. Binds to the consensus calcium-response element CaRE1 5'-CTATTTCGAG-3' sequence. This Mus musculus (Mouse) protein is Calcium-responsive transcription factor (Carf).